A 354-amino-acid polypeptide reads, in one-letter code: Peroxisomal membrane protein PEX32 (354 aa).

A run of 5 helical transmembrane segments spans residues 24–44 (LLNM…VIFL), 63–83 (FIAI…ACTV), 84–104 (LPTI…TTID), 151–171 (GFSL…IFTV), and 173–193 (SFLL…SVAT). Asparagine 319 is a glycosylation site (N-linked (GlcNAc...) asparagine).

This sequence belongs to the PEX28-32 family. PEX30/31 subfamily.

Its subcellular location is the peroxisome membrane. It localises to the endoplasmic reticulum membrane. With PEX24, contributes to tethering of peroxisomes to the endoplasmic reticulum for organelle biogenesis, positioning and segregation. The polypeptide is Peroxisomal membrane protein PEX32 (Ogataea parapolymorpha (strain ATCC 26012 / BCRC 20466 / JCM 22074 / NRRL Y-7560 / DL-1) (Yeast)).